Consider the following 758-residue polypeptide: Polyribonucleotide nucleotidyltransferase (758 aa).

Mg(2+)-binding residues include D488 and D494. A KH domain is found at 555-614 (PKLYTMKINPEKIRDVIGKGGAVIRALTEETGTQINIDEDGTITIASTDSAKADEAKRRI). One can recognise an S1 motif domain in the interval 624–692 (GKIYEGPVVK…EKGRVKLSMR (69 aa)). Residues 692 to 758 (RALLDRPMGD…AGEHSGQMDA (67 aa)) form a disordered region. The segment covering 707–735 (PAERGERGDRGDRGDRPERGERRERREPA) has biased composition (basic and acidic residues). Positions 736 to 745 (GADQQQQQQQ) are enriched in low complexity.

Belongs to the polyribonucleotide nucleotidyltransferase family. It depends on Mg(2+) as a cofactor.

The protein resides in the cytoplasm. It carries out the reaction RNA(n+1) + phosphate = RNA(n) + a ribonucleoside 5'-diphosphate. In terms of biological role, involved in mRNA degradation. Catalyzes the phosphorolysis of single-stranded polyribonucleotides processively in the 3'- to 5'-direction. The protein is Polyribonucleotide nucleotidyltransferase of Paracidovorax citrulli (strain AAC00-1) (Acidovorax citrulli).